Here is a 615-residue protein sequence, read N- to C-terminus: DNA mismatch repair protein MutL (615 aa).

The disordered stretch occupies residues 369 to 397 (REPVAPRYTPAPASGSRPAAPWPNAQPGY). Positions 378–391 (PAPASGSRPAAPWP) are enriched in low complexity.

The protein belongs to the DNA mismatch repair MutL/HexB family.

This protein is involved in the repair of mismatches in DNA. It is required for dam-dependent methyl-directed DNA mismatch repair. May act as a 'molecular matchmaker', a protein that promotes the formation of a stable complex between two or more DNA-binding proteins in an ATP-dependent manner without itself being part of a final effector complex. This is DNA mismatch repair protein MutL from Escherichia coli (strain SMS-3-5 / SECEC).